Here is a 210-residue protein sequence, read N- to C-terminus: NEDD4 family-interacting protein 1-like (210 aa).

The interval 1–31 (MAEPSGRYQQLPCEEEPEAGPQVAADAPPPY) is disordered. Over 1 to 105 (MAEPSGRYQQ…ADQLRIGNDG (105 aa)) the chain is Cytoplasmic. 2 consecutive short sequence motifs (PPxY motif) follow at residues 30–33 (PYSS) and 53–56 (PPSY). The helical transmembrane segment at 106–126 (IFMLTFFMAFLFNWIGFFLSF) threads the bilayer. Topologically, residues 127-132 (CLTTSA) are extracellular. Residues 133-153 (AGRYGAISGFGLSLIKWILIV) form a helical membrane-spanning segment. Topologically, residues 154–161 (RFSTYFPG) are cytoplasmic. The helical transmembrane segment at 162-182 (YFDGQYWLWWVFLVLGFLLFL) threads the bilayer. The Extracellular portion of the chain corresponds to 183–210 (RGFINYAKIRKMADSFSTLPRTRVLFIY).

The protein localises to the golgi apparatus membrane. May play a role in Golgi structure maintenance. This chain is NEDD4 family-interacting protein 1-like (ndfip1l), found in Danio rerio (Zebrafish).